Reading from the N-terminus, the 254-residue chain is Probable pectate lyase E (254 aa).

A signal peptide spans 1–17; that stretch reads MLQSLLLLPLFLTSAFA. An N-linked (GlcNAc...) asparagine glycan is attached at Asn175. Residues 228-254 form a disordered region; the sequence is NNNGKEPKKKSSGPSKACEYNQPLKKC.

Belongs to the polysaccharide lyase 3 family. Ca(2+) is required as a cofactor.

The protein resides in the secreted. It carries out the reaction Eliminative cleavage of (1-&gt;4)-alpha-D-galacturonan to give oligosaccharides with 4-deoxy-alpha-D-galact-4-enuronosyl groups at their non-reducing ends.. In terms of biological role, pectinolytic enzyme consist of four classes of enzymes: pectin lyase, polygalacturonase, pectin methylesterase and rhamnogalacturonase. Among pectinolytic enzymes, pectin lyase is the most important in depolymerization of pectin, since it cleaves internal glycosidic bonds of highly methylated pectins. Favors pectate, the anion, over pectin, the methyl ester. The chain is Probable pectate lyase E (plyE) from Aspergillus clavatus (strain ATCC 1007 / CBS 513.65 / DSM 816 / NCTC 3887 / NRRL 1 / QM 1276 / 107).